Consider the following 102-residue polypeptide: MSETFKLPDHDELPQLVQTTLFDVGARVRKAVQTGYKFDQQLFPSYHKDQTDRNELPQQKHDPNLRLDDLKQELAADSIFWDTASTQEIADSFAKPDFLKSH.

A disordered region spans residues 43-62 (FPSYHKDQTDRNELPQQKHD). Residues 46–62 (YHKDQTDRNELPQQKHD) are compositionally biased toward basic and acidic residues.

The protein belongs to the DIF1/spd1 family.

It localises to the cytoplasm. It is found in the nucleus. Regulates the ribonucleotide reductase activity. The sequence is that of S-phase delaying protein 2 (spd2) from Schizosaccharomyces pombe (strain 972 / ATCC 24843) (Fission yeast).